The following is a 346-amino-acid chain: PhoH-like protein (346 aa).

142-149 (GPAGTGKT) lines the ATP pocket.

It belongs to the PhoH family.

The protein resides in the cytoplasm. This is PhoH-like protein (ybeZ) from Escherichia coli O157:H7.